Consider the following 720-residue polypeptide: Cyclic nucleotide-gated ion channel 17 (720 aa).

Residues 1–85 (MELRKDKLLM…SEIVLKWNWV (85 aa)) lie on the Cytoplasmic side of the membrane. Residues 86–106 (FIVSCMVALFIDPLYFFVPAI) form a helical membrane-spanning segment. Residues 107-121 (GGDKNYPCARTDTSL) are Extracellular-facing. The helical transmembrane segment at 122-142 (SILVTFFRTIADLFYLLHIFI) threads the bilayer. The Cytoplasmic portion of the chain corresponds to 143-178 (KFRTGFIAPNSSTRVFGRGELVMDPKAIAWRYIKSD). A helical membrane pass occupies residues 179-199 (FIIDLIATLPLPQIVIWFVIS). Residues 200–211 (TTKSYRFDHNNN) lie on the Extracellular side of the membrane. A helical membrane pass occupies residues 212–232 (AIALIVLLQYIPRFYLIIPLS). Topologically, residues 233 to 252 (SQIVKATGVVTKTAWAGAAY) are cytoplasmic. The helical transmembrane segment at 253–273 (NLLLYMLASHVLGAAWYILSV) threads the bilayer. Residues 274-377 (DRYTSCWKSR…LSTTMFMGET (104 aa)) are Extracellular-facing. A helical transmembrane segment spans residues 378-398 (TFAVLIAIFGLVLFAHLIGNM). Topologically, residues 399-720 (QTYLQSLTVR…EPDFSAEHDD (322 aa)) are cytoplasmic. A nucleoside 3',5'-cyclic phosphate is bound by residues 481–605 (FFSQ…SKKL) and Glu-552. The tract at residues 597 to 612 (FRRLHSKKLQHTFRFY) is calmodulin-binding. An IQ domain is found at 617–646 (RTWAACFIQAAWRRYKRRVMENNLTAIESM).

The protein belongs to the cyclic nucleotide-gated cation channel (TC 1.A.1.5) family. In terms of assembly, homotetramer or heterotetramer. Part of a functional complex containing PSKR1, BAK1, CNGC17, and AHA. Interacts with AHA1, AHA2, and BAK1, but not with PSKR1 or BRI1.

Its subcellular location is the cell membrane. Functionally, probable cyclic nucleotide-gated ion channel. Forms a functional cation-translocating unit with AHAs that is activated by PSKR1/BAK1 and possibly other BAK1/RLK complexes. Required for PSK-induced protoplast expansion. This Arabidopsis thaliana (Mouse-ear cress) protein is Cyclic nucleotide-gated ion channel 17.